A 333-amino-acid polypeptide reads, in one-letter code: Ribosomal RNA small subunit methyltransferase H (333 aa).

Residues 31–33 (GGY), Asp-49, Phe-76, Asp-134, and Gln-141 each bind S-adenosyl-L-methionine.

The protein belongs to the methyltransferase superfamily. RsmH family.

Its subcellular location is the cytoplasm. The catalysed reaction is cytidine(1402) in 16S rRNA + S-adenosyl-L-methionine = N(4)-methylcytidine(1402) in 16S rRNA + S-adenosyl-L-homocysteine + H(+). Its function is as follows. Specifically methylates the N4 position of cytidine in position 1402 (C1402) of 16S rRNA. In Wolbachia sp. subsp. Brugia malayi (strain TRS), this protein is Ribosomal RNA small subunit methyltransferase H.